Consider the following 357-residue polypeptide: Membrane-bound lytic murein transglycosylase C (357 aa).

The first 15 residues, 1–15 (MKKYLLLALLPFLYA), serve as a signal peptide directing secretion. The N-palmitoyl cysteine moiety is linked to residue cysteine 16. The S-diacylglycerol cysteine moiety is linked to residue cysteine 16.

The protein belongs to the transglycosylase Slt family.

The protein resides in the cell outer membrane. It catalyses the reaction Exolytic cleavage of the (1-&gt;4)-beta-glycosidic linkage between N-acetylmuramic acid (MurNAc) and N-acetylglucosamine (GlcNAc) residues in peptidoglycan, from either the reducing or the non-reducing ends of the peptidoglycan chains, with concomitant formation of a 1,6-anhydrobond in the MurNAc residue.. Its function is as follows. Murein-degrading enzyme. May play a role in recycling of muropeptides during cell elongation and/or cell division. The sequence is that of Membrane-bound lytic murein transglycosylase C from Haemophilus influenzae (strain PittGG).